The sequence spans 552 residues: Chaperonin GroEL (552 aa).

Residues 29–32, Lys50, 86–90, Gly417, and Asp499 contribute to the ATP site; these read TAGP and DGTTT.

The protein belongs to the chaperonin (HSP60) family. In terms of assembly, forms a cylinder of 14 subunits composed of two heptameric rings stacked back-to-back. Interacts with the co-chaperonin GroES.

The protein localises to the cytoplasm. It carries out the reaction ATP + H2O + a folded polypeptide = ADP + phosphate + an unfolded polypeptide.. Together with its co-chaperonin GroES, plays an essential role in assisting protein folding. The GroEL-GroES system forms a nano-cage that allows encapsulation of the non-native substrate proteins and provides a physical environment optimized to promote and accelerate protein folding. This Ehrlichia canis (strain Jake) protein is Chaperonin GroEL.